The chain runs to 456 residues: Alcohol acyl transferase 1 allele GSc (456 aa).

Active-site proton acceptor residues include histidine 165 and asparagine 386.

The protein belongs to the plant acyltransferase family. In terms of tissue distribution, expressed at very low levels in the skin of ripe fruit.

In terms of biological role, involved in the biosynthesis of volatile esters which confer ripe apple fruit flavor. Alcohol acyl transferase that can use a wide range of alcohols as substrate to produce esters. This Malus domestica (Apple) protein is Alcohol acyl transferase 1 allele GSc.